Here is a 1518-residue protein sequence, read N- to C-terminus: Probable serine/threonine-protein kinase HSL1 (1518 aa).

Disordered regions lie at residues 1–43 (MTGH…GHLE) and 55–83 (RLSQ…PWKL). Polar residues predominate over residues 55 to 68 (RLSQPDSTVSVATK). A Protein kinase domain is found at 81–369 (WKLGKTLGKG…TQEILKHPLI (289 aa)). ATP contacts are provided by residues 87 to 95 (LGKGSSGRV) and Lys-110. The active-site Proton acceptor is the Asp-239. The interval 467–502 (LSSSSENKKSATESSVNEPRIEYASKTANNTGLRSE) is disordered. Polar residues predominate over residues 492–501 (KTANNTGLRS). Ser-511 carries the post-translational modification Phosphoserine. Low complexity predominate over residues 599-611 (SNSRLSLSASTSR). The interval 599 to 651 (SNSRLSLSASTSRETVHDNEMPLPQLPKSPSRYSLSRRAIHASPSTKSIHKSL) is disordered. Residues Ser-629 and Ser-685 each carry the phosphoserine modification. Positions 741 to 783 (EEEDNEKERDTQRQRQNDTKSSADTFTISGVSTNKENEGPEYP) are disordered. Basic and acidic residues predominate over residues 746 to 758 (EKERDTQRQRQND). The span at 759–774 (TKSSADTFTISGVSTN) shows a compositional bias: polar residues. Phosphoserine occurs at positions 837 and 866. Over residues 856–876 (EQLQKKNDRPSPLKPIQHQEL) the composition is skewed to basic and acidic residues. Disordered stretches follow at residues 856–898 (EQLQ…RRNI), 1005–1030 (DDKH…KQSA), 1150–1170 (APSD…RASV), and 1220–1243 (SPEN…RDSN). Ser-1220 is subject to Phosphoserine. Positions 1222–1243 (ENPSNTHMQKRFSSTRGSRDSN) are enriched in polar residues. At Ser-1250 the chain carries Phosphoserine. The interval 1259–1291 (EEDQDGHTSQADILESSMSYSKRRPSEESVNPK) is disordered. The span at 1265–1278 (HTSQADILESSMSY) shows a compositional bias: polar residues. 3 positions are modified to phosphoserine: Ser-1284, Ser-1287, and Ser-1325.

This sequence belongs to the protein kinase superfamily. CAMK Ser/Thr protein kinase family. NIM1 subfamily.

Its subcellular location is the bud neck. The catalysed reaction is L-seryl-[protein] + ATP = O-phospho-L-seryl-[protein] + ADP + H(+). It carries out the reaction L-threonyl-[protein] + ATP = O-phospho-L-threonyl-[protein] + ADP + H(+). The polypeptide is Probable serine/threonine-protein kinase HSL1 (HSL1) (Saccharomyces cerevisiae (strain ATCC 204508 / S288c) (Baker's yeast)).